Consider the following 556-residue polypeptide: Urocanate hydratase (556 aa).

NAD(+)-binding positions include 52–53 (GG), Q130, 176–178 (GMG), E196, R201, 242–243 (NA), 263–267 (QTSAH), 273–274 (YL), and Y322. Residue C410 is part of the active site. G492 provides a ligand contact to NAD(+).

The protein belongs to the urocanase family. Requires NAD(+) as cofactor.

It localises to the cytoplasm. It carries out the reaction 4-imidazolone-5-propanoate = trans-urocanate + H2O. The protein operates within amino-acid degradation; L-histidine degradation into L-glutamate; N-formimidoyl-L-glutamate from L-histidine: step 2/3. Its function is as follows. Catalyzes the conversion of urocanate to 4-imidazolone-5-propionate. This chain is Urocanate hydratase, found in Shewanella sp. (strain MR-7).